The following is a 528-amino-acid chain: Beta-hexosaminidase subunit alpha (528 aa).

The signal sequence occupies residues 1–22 (MAGCRLWVSLLLAAALACLATA). A propeptide spanning residues 23–88 (LWPWPQYIQT…PRPSFSNKQQ (66 aa)) is cleaved from the precursor. Cys58 and Cys104 are joined by a disulfide. Asn115, Asn157, and Asn295 each carry an N-linked (GlcNAc...) asparagine glycan. A disulfide bridge connects residues Cys277 and Cys328. Catalysis depends on Glu323, which acts as the Proton donor. The segment at 422-423 (NR) is critical for hydrolysis GM2 gangliosides. Asn487 is a glycosylation site (N-linked (GlcNAc...) asparagine). Cys504 and Cys521 are joined by a disulfide.

The protein belongs to the glycosyl hydrolase 20 family. There are 3 beta-hexosaminidase isozymes: isozyme A (hexosaminidase A) is a heterodimer composed of one subunit alpha and one subunit beta (chain A and B); isozyme B (hexosaminidase B) is a homodimer of two beta subunits (two chains A and B); isozyme S (hexosaminidase S) is a homodimer of two alpha subunits. The composition of the dimer (isozyme A versus isozyme S) has a significant effect on the substrate specificity of the alpha subunit active site. As to expression, ubiquitous. Most abundant in testis, adrenal, epididymis and heart. Low levels seen in the liver.

It is found in the lysosome. It catalyses the reaction Hydrolysis of terminal non-reducing N-acetyl-D-hexosamine residues in N-acetyl-beta-D-hexosaminides.. The enzyme catalyses N-acetyl-beta-D-galactosaminyl-(1-&gt;4)-beta-D-3-sulfogalactosyl-(1-&gt;4)-beta-D-glucosyl-(1&lt;-&gt;1')-ceramide + H2O = a beta-D-3-sulfogalactosyl-(1-&gt;4)-beta-D-glucosyl-(1&lt;-&gt;1')-ceramide + N-acetyl-beta-D-galactosamine. The catalysed reaction is a ganglioside GM2 (d18:1(4E)) + H2O = a ganglioside GM3 (d18:1(4E)) + N-acetyl-beta-D-galactosamine. It carries out the reaction a ganglioside GM2 + H2O = a ganglioside GM3 + N-acetyl-beta-D-galactosamine. It catalyses the reaction beta-D-GalNAc-(1-&gt;4)-alpha-L-IdoA-(1-&gt;3)-beta-D-GalNAc-4-sulfate-(1-&gt;4)-alpha-L-IdoA-(1-&gt;3)-D-GalNAc-4-sulfate + H2O = alpha-L-IdoA-(1-&gt;3)-beta-D-GalNAc-4-sulfate-(1-&gt;4)-alpha-L-IdoA-(1-&gt;3)-D-GalNAc-4-sulfate + N-acetyl-D-galactosamine. The enzyme catalyses N-acetyl-beta-D-6-sulfogalactosaminyl-(1-&gt;4)-alpha-L-iduronyl-(1-&gt;3)-N-acetyl-D-6-sulfogalactosamine + H2O = alpha-L-iduronyl-(1-&gt;3)-N-acetyl-D-6-sulfogalactosamine + N-acetyl-D-6-sulfogalactosamine. Addition of GM2A stimulates the hydrolysis of sulfated glycosphingolipid SM2 and the ganglioside GM2. Functionally, hydrolyzes the non-reducing end N-acetyl-D-hexosamine and/or sulfated N-acetyl-D-hexosamine of glycoconjugates, such as the oligosaccharide moieties from proteins and neutral glycolipids, or from certain mucopolysaccharides. The isozyme S is as active as the isozyme A on the anionic bis-sulfated glycans, the chondroitin-6-sulfate trisaccharide (C6S-3), and the dermatan sulfate pentasaccharide, and the sulfated glycosphingolipid SM2. The isozyme B does not hydrolyze each of these substrates, however hydrolyzes efficiently neutral oligosaccharide. Only the isozyme A is responsible for the degradation of GM2 gangliosides in the presence of GM2A. The sequence is that of Beta-hexosaminidase subunit alpha from Mus musculus (Mouse).